Reading from the N-terminus, the 372-residue chain is Heat-inducible transcription repressor HrcA (372 aa).

A disordered region spans residues 300–334 (YGRSGAAGEPAGNDPVGEPETESETESQTNDTEPI).

It belongs to the HrcA family.

Its function is as follows. Negative regulator of class I heat shock genes (grpE-dnaK-dnaJ and groELS operons). Prevents heat-shock induction of these operons. The polypeptide is Heat-inducible transcription repressor HrcA (Bifidobacterium longum (strain NCC 2705)).